The chain runs to 114 residues: Hydrogenase maturation factor HypA (114 aa).

Residue H2 participates in Ni(2+) binding. Zn(2+) is bound by residues C70, C73, C86, and C89.

Belongs to the HypA/HybF family.

Functionally, involved in the maturation of [NiFe] hydrogenases. Required for nickel insertion into the metal center of the hydrogenase. The polypeptide is Hydrogenase maturation factor HypA (Rippkaea orientalis (strain PCC 8801 / RF-1) (Cyanothece sp. (strain PCC 8801))).